Here is a 491-residue protein sequence, read N- to C-terminus: UDP-N-acetylmuramate--L-alanine ligase (491 aa).

Gly126 to Thr132 contributes to the ATP binding site.

The protein belongs to the MurCDEF family.

It localises to the cytoplasm. It catalyses the reaction UDP-N-acetyl-alpha-D-muramate + L-alanine + ATP = UDP-N-acetyl-alpha-D-muramoyl-L-alanine + ADP + phosphate + H(+). The protein operates within cell wall biogenesis; peptidoglycan biosynthesis. In terms of biological role, cell wall formation. This is UDP-N-acetylmuramate--L-alanine ligase from Escherichia coli O1:K1 / APEC.